The primary structure comprises 260 residues: Serine protease VLSP-1 (260 aa).

Residues 1 to 18 form the signal peptide; the sequence is MVLIRVLANLLVLHLSYA. A propeptide spanning residues 19–24 is cleaved from the precursor; it reads QKSSEL. Positions 25–251 constitute a Peptidase S1 domain; sequence VIGGDECNIN…YSDWIQSIIA (227 aa). 6 disulfides stabilise this stretch: Cys-31/Cys-165, Cys-52/Cys-68, Cys-100/Cys-258, Cys-144/Cys-212, Cys-176/Cys-191, and Cys-202/Cys-227. N-linked (GlcNAc...) asparagine glycosylation is present at Asn-44. Catalysis depends on His-67, which acts as the Charge relay system. An N-linked (GlcNAc...) asparagine glycan is attached at Asn-103. Asp-112 functions as the Charge relay system in the catalytic mechanism. N-linked (GlcNAc...) asparagine glycosylation occurs at Asn-156. Ser-206 acts as the Charge relay system in catalysis.

Belongs to the peptidase S1 family. Snake venom subfamily. As to expression, expressed by the venom gland.

It is found in the secreted. Its function is as follows. Snake venom serine protease that may act in the hemostasis system of the prey. This chain is Serine protease VLSP-1, found in Macrovipera lebetinus (Levantine viper).